A 98-amino-acid chain; its full sequence is UPF0473 protein lp_2273 (98 aa).

Belongs to the UPF0473 family.

In Lactiplantibacillus plantarum (strain ATCC BAA-793 / NCIMB 8826 / WCFS1) (Lactobacillus plantarum), this protein is UPF0473 protein lp_2273.